Consider the following 110-residue polypeptide: Phosphoribosyl-AMP cyclohydrolase (110 aa).

Mg(2+) is bound at residue D74. C75 is a Zn(2+) binding site. Mg(2+) is bound by residues D76 and D78. Residues C91 and C98 each contribute to the Zn(2+) site.

It belongs to the PRA-CH family. In terms of assembly, homodimer. It depends on Mg(2+) as a cofactor. Zn(2+) is required as a cofactor.

The protein localises to the cytoplasm. It catalyses the reaction 1-(5-phospho-beta-D-ribosyl)-5'-AMP + H2O = 1-(5-phospho-beta-D-ribosyl)-5-[(5-phospho-beta-D-ribosylamino)methylideneamino]imidazole-4-carboxamide. It functions in the pathway amino-acid biosynthesis; L-histidine biosynthesis; L-histidine from 5-phospho-alpha-D-ribose 1-diphosphate: step 3/9. Catalyzes the hydrolysis of the adenine ring of phosphoribosyl-AMP. This chain is Phosphoribosyl-AMP cyclohydrolase, found in Lacticaseibacillus paracasei (strain ATCC 334 / BCRC 17002 / CCUG 31169 / CIP 107868 / KCTC 3260 / NRRL B-441) (Lactobacillus paracasei).